The chain runs to 192 residues: Crossover junction endodeoxyribonuclease RuvC (192 aa).

Active-site residues include Asp9, Glu70, and Asp143. Residues Asp9, Glu70, and Asp143 each contribute to the Mg(2+) site. Residues 161–192 (GASVATTGPGSSSLTPAQRAWAEAEAKARRAR) are disordered. Positions 163–176 (SVATTGPGSSSLTP) are enriched in polar residues. Residues 182 to 192 (AEAEAKARRAR) are compositionally biased toward basic and acidic residues.

It belongs to the RuvC family. In terms of assembly, homodimer which binds Holliday junction (HJ) DNA. The HJ becomes 2-fold symmetrical on binding to RuvC with unstacked arms; it has a different conformation from HJ DNA in complex with RuvA. In the full resolvosome a probable DNA-RuvA(4)-RuvB(12)-RuvC(2) complex forms which resolves the HJ. Mg(2+) serves as cofactor.

Its subcellular location is the cytoplasm. The enzyme catalyses Endonucleolytic cleavage at a junction such as a reciprocal single-stranded crossover between two homologous DNA duplexes (Holliday junction).. The RuvA-RuvB-RuvC complex processes Holliday junction (HJ) DNA during genetic recombination and DNA repair. Endonuclease that resolves HJ intermediates. Cleaves cruciform DNA by making single-stranded nicks across the HJ at symmetrical positions within the homologous arms, yielding a 5'-phosphate and a 3'-hydroxyl group; requires a central core of homology in the junction. The consensus cleavage sequence is 5'-(A/T)TT(C/G)-3'. Cleavage occurs on the 3'-side of the TT dinucleotide at the point of strand exchange. HJ branch migration catalyzed by RuvA-RuvB allows RuvC to scan DNA until it finds its consensus sequence, where it cleaves and resolves the cruciform DNA. This is Crossover junction endodeoxyribonuclease RuvC from Pseudarthrobacter chlorophenolicus (strain ATCC 700700 / DSM 12829 / CIP 107037 / JCM 12360 / KCTC 9906 / NCIMB 13794 / A6) (Arthrobacter chlorophenolicus).